The following is a 98-amino-acid chain: U-megalopygitoxin(1)-Mo1 (98 aa).

The N-terminal stretch at 1–17 is a signal peptide; that stretch reads MYRETFVFCVLLAVVSA.

The protein belongs to the caterpillar 1 family. Contains 4 disulfide bonds. As to expression, expressed by the venom apparatus.

Its subcellular location is the secreted. Probable toxin. The chain is U-megalopygitoxin(1)-Mo1 from Megalopyge opercularis (Southern flannel moth).